Consider the following 520-residue polypeptide: GMP synthase [glutamine-hydrolyzing] (520 aa).

The Glutamine amidotransferase type-1 domain maps to 12-202; it reads KIIVLDFGSQ…AFDVCGCTGD (191 aa). The active-site Nucleophile is the C89. Active-site residues include H176 and E178. Residues 203-395 form the GMPS ATP-PPase domain; it reads WSMENFIDME…LGMPDAIVWR (193 aa). 230-236 contributes to the ATP binding site; sequence SGGVDSS.

As to quaternary structure, homodimer.

It catalyses the reaction XMP + L-glutamine + ATP + H2O = GMP + L-glutamate + AMP + diphosphate + 2 H(+). The protein operates within purine metabolism; GMP biosynthesis; GMP from XMP (L-Gln route): step 1/1. In terms of biological role, catalyzes the synthesis of GMP from XMP. In Enterococcus faecalis (strain ATCC 700802 / V583), this protein is GMP synthase [glutamine-hydrolyzing].